A 342-amino-acid chain; its full sequence is Phospho-N-acetylmuramoyl-pentapeptide-transferase (342 aa).

Helical transmembrane passes span 8–28 (VAQP…VIAP), 58–78 (GIPS…TAIF), 86–106 (IWVI…DDYL), 116–136 (ISLE…LIFL), 152–172 (GLID…VGSS), 184–204 (LATL…HLSL), 213–233 (VVGA…LSFL), 242–262 (VFMG…MSVM), 267–287 (FIYA…MAQV), and 318–338 (IVTR…AAII).

The protein belongs to the glycosyltransferase 4 family. MraY subfamily. Requires Mg(2+) as cofactor.

Its subcellular location is the cell inner membrane. It catalyses the reaction UDP-N-acetyl-alpha-D-muramoyl-L-alanyl-gamma-D-glutamyl-meso-2,6-diaminopimeloyl-D-alanyl-D-alanine + di-trans,octa-cis-undecaprenyl phosphate = di-trans,octa-cis-undecaprenyl diphospho-N-acetyl-alpha-D-muramoyl-L-alanyl-D-glutamyl-meso-2,6-diaminopimeloyl-D-alanyl-D-alanine + UMP. Its pathway is cell wall biogenesis; peptidoglycan biosynthesis. Catalyzes the initial step of the lipid cycle reactions in the biosynthesis of the cell wall peptidoglycan: transfers peptidoglycan precursor phospho-MurNAc-pentapeptide from UDP-MurNAc-pentapeptide onto the lipid carrier undecaprenyl phosphate, yielding undecaprenyl-pyrophosphoryl-MurNAc-pentapeptide, known as lipid I. The chain is Phospho-N-acetylmuramoyl-pentapeptide-transferase from Anaplasma marginale (strain Florida).